Reading from the N-terminus, the 453-residue chain is Venom prothrombin activator notecarin-D2 (453 aa).

Residues 1 to 20 form the signal peptide; that stretch reads MAPQLLLCLILTFLWSLPEA. Residues 21 to 40 constitute a propeptide that is removed on maturation; the sequence is ESNVFLKSKVANRFLQRTKR. One can recognise a Gla domain in the interval 41–86; that stretch reads SNSLFEEIRPGNIERECIEEKCSKEEAREVFEDNEKTETFWNVYVD. 4-carboxyglutamate is present on residues glutamate 46, glutamate 47, glutamate 54, glutamate 56, glutamate 59, glutamate 60, glutamate 65, glutamate 66, glutamate 69, glutamate 72, and glutamate 75. Cysteines 57 and 62 form a disulfide. Residues 86-122 form the EGF-like 1; calcium-binding domain; the sequence is DGDQCSSNPCHYRGTCKDGIGSYTCTCLPNYEGKNCE. 11 disulfide bridges follow: cysteine 90–cysteine 101, cysteine 95–cysteine 110, cysteine 112–cysteine 121, cysteine 129–cysteine 140, cysteine 136–cysteine 149, cysteine 151–cysteine 164, cysteine 172–cysteine 326, cysteine 216–cysteine 221, cysteine 236–cysteine 252, cysteine 374–cysteine 388, and cysteine 399–cysteine 427. An O-linked (Hex...) serine glycan is attached at serine 92. The region spanning 129–164 is the EGF-like 2 domain; sequence CRAFNGNCWHFCKRVQSETQCSCAESYLLGVDGHSC. Positions 182–209 are cleaved as a propeptide — activation peptide; that stretch reads REASLPDFVQSQKATVLKKSDNPSPDIR. Residues 210–451 form the Peptidase S1 domain; it reads IVNGMDCKLG…FIPWIKKIMS (242 aa). Histidine 251 (charge relay system) is an active-site residue. A glycan (N-linked (GlcNAc...) asparagine) is linked at asparagine 254. Residue aspartate 306 is the Charge relay system of the active site. The active-site Charge relay system is serine 403.

The protein belongs to the peptidase S1 family. Snake venom subfamily. In terms of assembly, heterodimer of a light chain and a heavy chain; disulfide-linked. Post-translationally, gamma-carboxyglutamate residues are formed by vitamin K dependent carboxylation. These residues are essential for the binding of calcium. Expressed by the venom gland.

The protein localises to the secreted. It carries out the reaction Selective cleavage of Arg-|-Thr and then Arg-|-Ile bonds in prothrombin to form thrombin.. Functionally, snake prothrombin activator that attacks the hemostatic system of prey. This protein is functionally similar to blood coagulation factor Xa. This chain is Venom prothrombin activator notecarin-D2, found in Notechis scutatus scutatus (Mainland tiger snake).